The chain runs to 68 residues: ATP synthase subunit c (68 aa).

The next 2 membrane-spanning stretches (helical) occupy residues 5–25 and 47–67; these read AAAI…GMIV and FIGV…AFMV.

The protein belongs to the ATPase C chain family. F-type ATPases have 2 components, F(1) - the catalytic core - and F(0) - the membrane proton channel. F(1) has five subunits: alpha(3), beta(3), gamma(1), delta(1), epsilon(1). F(0) has three main subunits: a(1), b(2) and c(10-14). The alpha and beta chains form an alternating ring which encloses part of the gamma chain. F(1) is attached to F(0) by a central stalk formed by the gamma and epsilon chains, while a peripheral stalk is formed by the delta and b chains.

The protein resides in the cell membrane. F(1)F(0) ATP synthase produces ATP from ADP in the presence of a proton or sodium gradient. F-type ATPases consist of two structural domains, F(1) containing the extramembraneous catalytic core and F(0) containing the membrane proton channel, linked together by a central stalk and a peripheral stalk. During catalysis, ATP synthesis in the catalytic domain of F(1) is coupled via a rotary mechanism of the central stalk subunits to proton translocation. In terms of biological role, key component of the F(0) channel; it plays a direct role in translocation across the membrane. A homomeric c-ring of between 10-14 subunits forms the central stalk rotor element with the F(1) delta and epsilon subunits. In Oceanobacillus iheyensis (strain DSM 14371 / CIP 107618 / JCM 11309 / KCTC 3954 / HTE831), this protein is ATP synthase subunit c.